Here is a 145-residue protein sequence, read N- to C-terminus: Large ribosomal subunit protein uL15 (145 aa).

The tract at residues 1 to 42 (MELHTLKATPGSRKAKHRVGRGHAAGKGKQAGRGQSGQTKRS) is disordered. Residues 13–26 (RKAKHRVGRGHAAG) show a composition bias toward basic residues.

The protein belongs to the universal ribosomal protein uL15 family. Part of the 50S ribosomal subunit.

Binds to the 23S rRNA. The sequence is that of Large ribosomal subunit protein uL15 from Metamycoplasma arthritidis (strain 158L3-1) (Mycoplasma arthritidis).